Consider the following 277-residue polypeptide: Orotidine 5'-phosphate decarboxylase (277 aa).

Substrate contacts are provided by residues Asp40, 62 to 64 (KTH), 93 to 102 (DRKFIDIGNT), Tyr229, and Arg247. The Proton donor role is filled by Lys95.

Belongs to the OMP decarboxylase family.

The catalysed reaction is orotidine 5'-phosphate + H(+) = UMP + CO2. It functions in the pathway pyrimidine metabolism; UMP biosynthesis via de novo pathway; UMP from orotate: step 2/2. This is Orotidine 5'-phosphate decarboxylase (pyrG) from Aspergillus oryzae (strain ATCC 42149 / RIB 40) (Yellow koji mold).